The chain runs to 23 residues: Fimbrial protein (23 aa).

A disulfide bridge links Cys8 with Cys21.

The protein belongs to the N-Me-Phe pilin family. The pili are polar flexible filaments of about 5.4 nanometers diameter and 2.5 micrometers average length; they consist of only a single polypeptide chain arranged in a helical configuration of five subunits per turn in the assembled pilus.

The protein localises to the fimbrium. The sequence is that of Fimbrial protein (pil) from Pseudomonas aeruginosa.